Here is a 121-residue protein sequence, read N- to C-terminus: Large ribosomal subunit protein bL17 (121 aa).

Belongs to the bacterial ribosomal protein bL17 family. In terms of assembly, part of the 50S ribosomal subunit. Contacts protein L32.

The chain is Large ribosomal subunit protein bL17 from Metamycoplasma arthritidis (strain 158L3-1) (Mycoplasma arthritidis).